Reading from the N-terminus, the 312-residue chain is 1-(5-phosphoribosyl)-5-[(5-phosphoribosylamino)methylideneamino] imidazole-4-carboxamide isomerase HISN3, chloroplastic (312 aa).

The transit peptide at 1–67 (MRSPASTPSI…IHKGKVKQIV (67 aa)) directs the protein to the chloroplast. D57 lines the 1-(5-phospho-beta-D-ribosyl)-5-[(5-phospho-beta-D-ribosylamino)methylideneamino]imidazole-4-carboxamide pocket. Q65 contacts 5-[(5-phospho-1-deoxy-D-ribulos-1-ylimino)methylamino]-1-(5-phospho-beta-D-ribosyl)imidazole-4-carboxamide. Positions 65 and 66 each coordinate Na(+). Residue G68 participates in 1-(5-phospho-beta-D-ribosyl)-5-[(5-phospho-beta-D-ribosylamino)methylideneamino]imidazole-4-carboxamide binding. 5-[(5-phospho-1-deoxy-D-ribulos-1-ylimino)methylamino]-1-(5-phospho-beta-D-ribosyl)imidazole-4-carboxamide is bound by residues H108, G138, T158, and S159. 1-(5-phospho-beta-D-ribosyl)-5-[(5-phospho-beta-D-ribosylamino)methylideneamino]imidazole-4-carboxamide is bound by residues G138, T158, and S159. Residues S159 and F162 each contribute to the Na(+) site. D187, R203, W204, and H230 together coordinate 1-(5-phospho-beta-D-ribosyl)-5-[(5-phospho-beta-D-ribosylamino)methylideneamino]imidazole-4-carboxamide. Residue D187 coordinates 5-[(5-phospho-1-deoxy-D-ribulos-1-ylimino)methylamino]-1-(5-phospho-beta-D-ribosyl)imidazole-4-carboxamide. Position 204 (W204) interacts with 5-[(5-phospho-1-deoxy-D-ribulos-1-ylimino)methylamino]-1-(5-phospho-beta-D-ribosyl)imidazole-4-carboxamide. E235 provides a ligand contact to Na(+). Residues G236, G262, G285, and S286 each coordinate 1-(5-phospho-beta-D-ribosyl)-5-[(5-phospho-beta-D-ribosylamino)methylideneamino]imidazole-4-carboxamide. 5-[(5-phospho-1-deoxy-D-ribulos-1-ylimino)methylamino]-1-(5-phospho-beta-D-ribosyl)imidazole-4-carboxamide-binding residues include G236, G262, G285, and S286.

It belongs to the HisA/HisF family. Requires Na(+) as cofactor.

It is found in the plastid. The protein localises to the chloroplast. It catalyses the reaction 1-(5-phospho-beta-D-ribosyl)-5-[(5-phospho-beta-D-ribosylamino)methylideneamino]imidazole-4-carboxamide = 5-[(5-phospho-1-deoxy-D-ribulos-1-ylimino)methylamino]-1-(5-phospho-beta-D-ribosyl)imidazole-4-carboxamide. Its pathway is amino-acid biosynthesis; L-histidine biosynthesis; L-histidine from 5-phospho-alpha-D-ribose 1-diphosphate: step 4/9. Functionally, component of the histidine biosynthesis pathway that catalyzes the isomerization of 5'-ProFAR (pro-phosphoribosyl formimino-5-aminoimidazole-4-carboxamide ribonucleotide, referred as 1-(5-phospho-beta-D-ribosyl)-5-[(5-phospho-beta-D-ribosylamino)methylideneamino]imidazole-4-carboxamide) to PrFAR (phosphoribulosyl formimino-5-aminoimidazole-4-carboxamide ribonucleotide, referred as 5-[(5-phospho-1-deoxy-D-ribulos-1-ylimino)methylamino]-1-(5-phospho-beta-D-ribosyl)imidazole-4-carboxamide). This is 1-(5-phosphoribosyl)-5-[(5-phosphoribosylamino)methylideneamino] imidazole-4-carboxamide isomerase HISN3, chloroplastic from Medicago truncatula (Barrel medic).